Reading from the N-terminus, the 292-residue chain is Sulfhydrogenase 1 subunit gamma (292 aa).

The FAD-binding FR-type domain maps to 15–115; it reads YALHRVKVLK…RGPYGNGFPV (101 aa). 4 residues coordinate [2Fe-2S] cluster: cysteine 253, cysteine 258, cysteine 261, and cysteine 273.

In terms of assembly, heterotetramer of alpha, beta, gamma and delta subunits. The nickel-containing alpha and delta subunits constitute the hydrogenase activity. The beta and gamma subunits (flavin-containing dimer) constitute the sulfur reductase activity. It depends on FAD as a cofactor. [2Fe-2S] cluster serves as cofactor.

The protein resides in the cytoplasm. It catalyses the reaction n sulfur + H2 = (n-1) sulfur + hydrogen sulfide + H(+). With respect to regulation, stimulated by rubredoxin at pH 7.6 but not ferredoxin. Functionally, part of a bifunctional enzyme complex that functions as an NADPH-dependent hydrogen-evolving hydrogenase with sulfur reducing activity. May play a role in hydrogen cycling during fermentative growth. Activity not exhibited with NAD. The beta and gamma subunits form the sulfur reducing component that catalyzes the cytoplasmic production of hydrogen sulfide in the presence of elemental sulfur. Not active in the presence of sodium sulfate, sodium sulfite, sodium thiosulfate or cysteine. The protein is Sulfhydrogenase 1 subunit gamma of Pyrococcus furiosus (strain ATCC 43587 / DSM 3638 / JCM 8422 / Vc1).